Reading from the N-terminus, the 325-residue chain is Release factor glutamine methyltransferase (325 aa).

S-adenosyl-L-methionine is bound by residues 141-145, aspartate 164, tryptophan 193, and asparagine 207; that span reads GTGSG. 207–210 contacts substrate; the sequence is NPPY. The disordered stretch occupies residues 306–325; the sequence is LPPIHIDAKPSAPGNGPTKA.

The protein belongs to the protein N5-glutamine methyltransferase family. PrmC subfamily.

The catalysed reaction is L-glutaminyl-[peptide chain release factor] + S-adenosyl-L-methionine = N(5)-methyl-L-glutaminyl-[peptide chain release factor] + S-adenosyl-L-homocysteine + H(+). In terms of biological role, methylates the class 1 translation termination release factors RF1/PrfA and RF2/PrfB on the glutamine residue of the universally conserved GGQ motif. This Rhodospirillum rubrum (strain ATCC 11170 / ATH 1.1.1 / DSM 467 / LMG 4362 / NCIMB 8255 / S1) protein is Release factor glutamine methyltransferase.